A 162-amino-acid chain; its full sequence is Ciliary microtubule inner protein 5 (162 aa).

The segment at 1–44 is disordered; sequence MGSHPTPGLQRTTSAGYRLPPTRPPASVSPAARGGPMASRGLAG.

It localises to the cell projection. It is found in the cilium. The polypeptide is Ciliary microtubule inner protein 5 (Homo sapiens (Human)).